The sequence spans 903 residues: Chitin synthase 1 (903 aa).

The segment at 1-154 is disordered; it reads MDPRYGAQPQ…YQDQPQQGGG (154 aa). Over residues 67–79 the composition is skewed to polar residues; it reads DHLNLNAAQSVDN. Asparagine 79 carries an N-linked (GlcNAc...) asparagine glycan. Over residues 100 to 117 the composition is skewed to low complexity; that stretch reads YYNQPYEPRPQQQPYDQG. Residues 135–150 are compositionally biased toward polar residues; sequence HQPSDAPSEPYQDQPQ. 9 helical membrane passes run 444–464, 543–563, 573–593, 619–639, 654–674, 700–720, 729–749, 828–848, and 875–895; these read SAFGFISVLPGAFSAYRYVAL, RWLNGSFFAAIYAIVHFLDFL, FAFFIEFIFNTINMIFAWFAI, ILGVVFTWLYGVFLITCFVLS, MCWFWAIIMIYLLFAAIFIAV, MLIISVMSTFGIWLIASLIML, LVQYMLLTPTFTNVLNVYAFC, GVVLIWMVSNFGLAALVLSSA, and IVLWSVAGLSAFKFIGAMWFL.

The protein belongs to the chitin synthase family. Class I subfamily.

It is found in the cell membrane. It carries out the reaction [(1-&gt;4)-N-acetyl-beta-D-glucosaminyl](n) + UDP-N-acetyl-alpha-D-glucosamine = [(1-&gt;4)-N-acetyl-beta-D-glucosaminyl](n+1) + UDP + H(+). Polymerizes chitin, a structural polymer of the cell wall and septum, by transferring the sugar moiety of UDP-GlcNAc to the non-reducing end of the growing chitin polymer. Plays an important role in nuclear sorting or distribution. The polypeptide is Chitin synthase 1 (Fusarium oxysporum f. sp. lycopersici (strain 4287 / CBS 123668 / FGSC 9935 / NRRL 34936) (Fusarium vascular wilt of tomato)).